We begin with the raw amino-acid sequence, 134 residues long: Cytochrome b5 (134 aa).

Position 2 is an N-acetylalanine (Ala2). N6-acetyllysine occurs at positions 7, 10, and 19. The region spanning 9–85 (VKYYTLEEIQ…SKTYIIGELH (77 aa)) is the Cytochrome b5 heme-binding domain. Positions 44 and 68 each coordinate heme. The chain crosses the membrane as a helical span at residues 109 to 131 (WWTNWVIPAISALVVALMYRLYM).

The protein belongs to the cytochrome b5 family.

Its subcellular location is the endoplasmic reticulum membrane. It is found in the microsome membrane. Cytochrome b5 is a membrane-bound hemoprotein functioning as an electron carrier for several membrane-bound oxygenases. It is also involved in several steps of the sterol biosynthesis pathway, particularly in the C-6 double bond introduction during the C-6 desaturation. In Rattus norvegicus (Rat), this protein is Cytochrome b5 (Cyb5a).